Consider the following 69-residue polypeptide: UPF0435 protein SH1076 (69 aa).

Belongs to the UPF0435 family.

This chain is UPF0435 protein SH1076, found in Staphylococcus haemolyticus (strain JCSC1435).